The following is a 307-amino-acid chain: Shikimate kinase 2, chloroplastic (307 aa).

Residues Met1–Tyr60 constitute a chloroplast transit peptide. An ATP-binding site is contributed by Gly101–Ser108. A Mg(2+)-binding site is contributed by Ser108. The substrate site is built by Asp126, Arg151, and Gly173. Arg212 is an ATP binding site. Residues His285–Leu307 are disordered.

Belongs to the shikimate kinase family. Requires Mg(2+) as cofactor. As to expression, expressed in panicles.

Its subcellular location is the plastid. It localises to the chloroplast. It catalyses the reaction shikimate + ATP = 3-phosphoshikimate + ADP + H(+). It functions in the pathway metabolic intermediate biosynthesis; chorismate biosynthesis; chorismate from D-erythrose 4-phosphate and phosphoenolpyruvate: step 5/7. Catalyzes the specific phosphorylation of the 3-hydroxyl group of shikimic acid using ATP as a cosubstrate. This is Shikimate kinase 2, chloroplastic (SK2) from Oryza sativa subsp. japonica (Rice).